The sequence spans 507 residues: Chromosomal replication initiator protein DnaA (507 aa).

Positions 1 to 112 are domain I, interacts with DnaA modulators; that stretch reads MTDDPGSGFT…PATDEADDTT (112 aa). The disordered stretch occupies residues 99–162; the sequence is RIAPPATDEA…ERPRNTDSAT (64 aa). Polar residues predominate over residues 113 to 127; it reads VPPSENPATTSPDTT. The segment at 113-166 is domain II; sequence VPPSENPATTSPDTTTDNDEIDDSAAARGDNQHSWPSYFTERPRNTDSATAGVT. Residues 167–383 form a domain III, AAA+ region region; that stretch reads SLNRRYTFDT…GALIRVTAFA (217 aa). Residues glycine 211, glycine 213, lysine 214, and threonine 215 each contribute to the ATP site. Residues 384–507 are domain IV, binds dsDNA; the sequence is SLNKTPIDKA…TTRIRQRSKR (124 aa).

The protein belongs to the DnaA family. As to quaternary structure, oligomerizes as a right-handed, spiral filament on DNA at oriC.

The protein resides in the cytoplasm. Functionally, plays an essential role in the initiation and regulation of chromosomal replication. ATP-DnaA binds to the origin of replication (oriC) to initiate formation of the DNA replication initiation complex once per cell cycle. Binds the DnaA box (a 9 base pair repeat at the origin) and separates the double-stranded (ds)DNA. Forms a right-handed helical filament on oriC DNA; dsDNA binds to the exterior of the filament while single-stranded (ss)DNA is stabiized in the filament's interior. The ATP-DnaA-oriC complex binds and stabilizes one strand of the AT-rich DNA unwinding element (DUE), permitting loading of DNA polymerase. After initiation quickly degrades to an ADP-DnaA complex that is not apt for DNA replication. Binds acidic phospholipids. The sequence is that of Chromosomal replication initiator protein DnaA from Mycobacterium bovis (strain ATCC BAA-935 / AF2122/97).